Reading from the N-terminus, the 397-residue chain is Putative odorant receptor 83c (397 aa).

The Cytoplasmic segment spans residues 1 to 39 (MSTSESPSSRFRELSKYINSLTNLLGVDFLSPKLKFNYR). Residues 40-60 (TWTTIFAIANYTGFTVFTILN) traverse the membrane as a helical segment. Topologically, residues 61–70 (NGGDWRVGLK) are extracellular. Residues 71–90 (ASLMTGGLFHGLGKFLTCLL) form a helical membrane-spanning segment. At 91–136 (KHQDMRRLVLYSQSIYDEYETRGDSYHRTLNSNIDRLLGIMKIIRN) the chain is on the cytoplasmic side. Residues 137 to 157 (GYVFAFCLMELLPLAMLMYDG) form a helical membrane-spanning segment. Over 158 to 186 (TRVTAMQYLIPGLPLENNYCYVVTYMIQT) the chain is Extracellular. A helical transmembrane segment spans residues 187–207 (VTMLVQGVGFYSGDLFVFLGL). Residues 208-282 (TQILTFADML…ALYYELIATQ (75 aa)) are Cytoplasmic-facing. A helical transmembrane segment spans residues 283 to 299 (VLSMALAMMLSFCINLS). The Extracellular segment spans residues 300-305 (SFHMPS). Residues 306–326 (AIFFVVSAYSMSIYCILGTIL) form a helical membrane-spanning segment. Over 327–365 (EFAYDQVYESICNVTWYELSGEQRKLFGFLLRESQYPHN) the chain is Cytoplasmic. A helical membrane pass occupies residues 366–386 (IQILGVMSLSVRTALQIVKLI). Topologically, residues 387-397 (YSVSMMMMNRA) are extracellular.

This sequence belongs to the insect chemoreceptor superfamily. Heteromeric odorant receptor channel (TC 1.A.69) family. Or67d subfamily. Interacts with Orco. Complexes exist early in the endomembrane system in olfactory sensory neurons (OSNs), coupling these complexes to the conserved ciliary trafficking pathway. In terms of tissue distribution, expressed in olfactory sensory neurons in the antenna.

The protein resides in the cell membrane. Its function is as follows. Odorant receptor which mediates acceptance or avoidance behavior, depending on its substrates. The odorant receptor repertoire encodes a large collection of odor stimuli that vary widely in identity, intensity, and duration. May form a complex with Orco to form odorant-sensing units, providing sensitive and prolonged odorant signaling and calcium permeability. The polypeptide is Putative odorant receptor 83c (Or83c) (Drosophila melanogaster (Fruit fly)).